The sequence spans 508 residues: Photosystem II CP47 reaction center protein (508 aa).

The next 6 membrane-spanning stretches (helical) occupy residues 21–36 (SVHI…WAGS), 101–115 (IVFS…IWHW), 140–156 (GIHL…FGAF), 203–218 (IAAG…FHLS), 237–252 (VLSS…AFVV), and 457–472 (SFAL…HGAR).

Belongs to the PsbB/PsbC family. PsbB subfamily. In terms of assembly, PSII is composed of 1 copy each of membrane proteins PsbA, PsbB, PsbC, PsbD, PsbE, PsbF, PsbH, PsbI, PsbJ, PsbK, PsbL, PsbM, PsbT, PsbX, PsbY, PsbZ, Psb30/Ycf12, at least 3 peripheral proteins of the oxygen-evolving complex and a large number of cofactors. It forms dimeric complexes. Binds multiple chlorophylls. PSII binds additional chlorophylls, carotenoids and specific lipids. serves as cofactor.

It is found in the plastid. It localises to the chloroplast thylakoid membrane. Its function is as follows. One of the components of the core complex of photosystem II (PSII). It binds chlorophyll and helps catalyze the primary light-induced photochemical processes of PSII. PSII is a light-driven water:plastoquinone oxidoreductase, using light energy to abstract electrons from H(2)O, generating O(2) and a proton gradient subsequently used for ATP formation. In Olimarabidopsis pumila (Dwarf rocket), this protein is Photosystem II CP47 reaction center protein.